The following is a 378-amino-acid chain: MGSSEKNGTAYGEYTYAELEREQYWPSEKLRISITGAGGFIGSHIARRLKSEGHYIIASDWKKNEHMTEDMFCHEFHLVDLRVMDNCLKVTNGVDHVFNLAADMGGMGFIQSNHSVIMYNNTMISFNMLEAARINGVKRFFYASSACIYPEFKQLETNVSLKESDAWPAEPQDAYGLEKLATEELCKHYTKDFGIECRVGRFHNIYGPFGTWKGGREKAPAAFCRKAQTSTDRFEMWGDGLQTRSFTFIDECVEGVLRLTKSDFREPVNIGSDEMVSMNEMAEIILSFEDRELPIHHIPGPEGVRGRNSDNTLIKEKLGWAPTMKLKDGLRFTYFWIKEQIEKEKTQGVDIAGYGSSKVVSTQAPVQLGSLRAADGKE.

NAD(+)-binding positions include 36 to 62 (GAGG…SDWK), D60, and D80. Residues G105 and 145-147 (SAC) each bind substrate. NAD(+) is bound by residues Y175 and K179. Y175 acts as the Proton acceptor in catalysis. Substrate is bound by residues N204, 217-219 (EKA), K226, 242-244 (QTR), R307, and S357.

Belongs to the NAD(P)-dependent epimerase/dehydratase family. In terms of assembly, homodimer. The cofactor is NAD(+).

It catalyses the reaction GDP-alpha-D-mannose = GDP-beta-L-gulose. It carries out the reaction GDP-beta-L-gulose = GDP-beta-L-galactose. It participates in cofactor biosynthesis; L-ascorbate biosynthesis via GDP-alpha-D-mannose pathway; L-ascorbate from GDP-alpha-D-mannose: step 1/5. Its activity is regulated as follows. Strongly activated by NAD. Activated by NADP. Slightly activated by NADH and NADPH. Inhibited by GDP. Its function is as follows. Catalyzes a reversible epimerization of GDP-D-mannose that precedes the committed step in the biosynthesis of vitamin C (L-ascorbate), resulting in the hydrolysis of the highly energetic glycosyl-pyrophosphoryl linkage. Able to catalyze 2 distinct epimerization reactions and can release both GDP-L-galactose and GDP-L-gulose from GDP-mannose. The chain is GDP-mannose 3,5-epimerase 1 (GME-1) from Oryza sativa subsp. japonica (Rice).